Reading from the N-terminus, the 431-residue chain is Glutamate-1-semialdehyde 2,1-aminomutase (431 aa).

Position 266 is an N6-(pyridoxal phosphate)lysine (Lys266).

The protein belongs to the class-III pyridoxal-phosphate-dependent aminotransferase family. HemL subfamily. Homodimer. The cofactor is pyridoxal 5'-phosphate.

It is found in the cytoplasm. The enzyme catalyses (S)-4-amino-5-oxopentanoate = 5-aminolevulinate. It participates in porphyrin-containing compound metabolism; protoporphyrin-IX biosynthesis; 5-aminolevulinate from L-glutamyl-tRNA(Glu): step 2/2. The polypeptide is Glutamate-1-semialdehyde 2,1-aminomutase (Wolinella succinogenes (strain ATCC 29543 / DSM 1740 / CCUG 13145 / JCM 31913 / LMG 7466 / NCTC 11488 / FDC 602W) (Vibrio succinogenes)).